A 180-amino-acid polypeptide reads, in one-letter code: Geminin homolog (180 aa).

The span at 1-27 (MSRIGLQQLNNSARNSPFGSEKATGTK) shows a compositional bias: polar residues. The interval 1-29 (MSRIGLQQLNNSARNSPFGSEKATGTKQI) is disordered.

It belongs to the geminin family. Homodimer. Interacts with cdt-1; the interaction most likely inhibits the ability of cdt-1 to load the mini-chromosome maintenance (MCM) complex onto DNA and therefore reduces DNA replication licensing activity. Interacts with nob-1 and ceh-32.

The protein resides in the cytoplasm. It is found in the nucleus. Its function is as follows. Inhibits DNA replication by binding to the DNA replication licensing factor cdt-1. Its interaction with cdt-1 prevents the cdt-1 loading of the mini-chromosome maintenance (MCM) complex onto DNA and therefore DNA replication licencing. The sequence is that of Geminin homolog from Caenorhabditis elegans.